The primary structure comprises 349 residues: Cytoplasmic tRNA 2-thiolation protein 2 (349 aa).

It belongs to the CTU2/NCS2 family.

It is found in the cytoplasm. Its pathway is tRNA modification; 5-methoxycarbonylmethyl-2-thiouridine-tRNA biosynthesis. Plays a central role in 2-thiolation of mcm(5)S(2)U at tRNA wobble positions of tRNA(Lys), tRNA(Glu) and tRNA(Gln). May act by forming a heterodimer with tut-1/ctu-1 that ligates sulfur from thiocarboxylated urm-1 onto the uridine of tRNAs at wobble position. This Caenorhabditis elegans protein is Cytoplasmic tRNA 2-thiolation protein 2.